The chain runs to 128 residues: Mu-like prophage FluMu protein gp35 (128 aa).

The disordered stretch occupies residues 53 to 87; the sequence is TETGSQEGGEGLSKEPAGSDEQKQLRADPPSTDLN.

The protein to phage Mu protein gp35. As to quaternary structure, monomer.

The polypeptide is Mu-like prophage FluMu protein gp35 (Haemophilus influenzae (strain ATCC 51907 / DSM 11121 / KW20 / Rd)).